Here is a 257-residue protein sequence, read N- to C-terminus: Hydroxyacylglutathione hydrolase (257 aa).

The Zn(2+) site is built by histidine 54, histidine 56, aspartate 58, histidine 59, histidine 113, aspartate 137, and histidine 175.

This sequence belongs to the metallo-beta-lactamase superfamily. Glyoxalase II family. Monomer. The cofactor is Zn(2+).

It catalyses the reaction an S-(2-hydroxyacyl)glutathione + H2O = a 2-hydroxy carboxylate + glutathione + H(+). It functions in the pathway secondary metabolite metabolism; methylglyoxal degradation; (R)-lactate from methylglyoxal: step 2/2. Thiolesterase that catalyzes the hydrolysis of S-D-lactoyl-glutathione to form glutathione and D-lactic acid. The chain is Hydroxyacylglutathione hydrolase from Acaryochloris marina (strain MBIC 11017).